The chain runs to 307 residues: MVNTHVNLPGLDLKNPVMPASGTFGFGDVPAAQKFDLNDLGAMVIKTTTPHATTGNPQPQIAILEDGVLNSVGLTNPGVDQVISEKLTKLRHQYIDLPIMASVGGDSEDDYVEVAKKLSASGLVNALEINVSCPNVAQGGMSFGVHAGVVEELTKKIKMAVALPIYVKLTPNVTDIVEIAKAAESGGADGISMINTVLGMRIDVKTRKPLLGHNMGGLSGEAVKPIAIRMISQVRQVTQLPIIGMGGISTAQDVIEFILAGANAVAVGSAHFEDELAAKHIAENLPAELEKLGIEDINDLVGQVKFN.

Residues S21 and 46-47 contribute to the FMN site; that span reads KT. Substrate contacts are provided by residues K46, 70–74, and N130; that span reads NSVGL. N130 lines the FMN pocket. Catalysis depends on C133, which acts as the Nucleophile. FMN-binding residues include K168 and I194. Residue 195 to 196 participates in substrate binding; that stretch reads NT. FMN contacts are provided by residues G220, 246-247, and 268-269; these read GG and GS.

This sequence belongs to the dihydroorotate dehydrogenase family. Type 1 subfamily. In terms of assembly, homodimer. FMN is required as a cofactor.

The protein localises to the cytoplasm. It carries out the reaction (S)-dihydroorotate + fumarate = orotate + succinate. The protein operates within pyrimidine metabolism; UMP biosynthesis via de novo pathway. Catalyzes the conversion of dihydroorotate to orotate with fumarate as the electron acceptor. In Lactobacillus delbrueckii subsp. bulgaricus (strain ATCC BAA-365 / Lb-18), this protein is Dihydroorotate dehydrogenase A (fumarate) (pyrD).